The primary structure comprises 227 residues: Phosphoribosylformylglycinamidine synthase subunit PurQ (227 aa).

A Glutamine amidotransferase type-1 domain is found at 3-225 (FAVIVFPGSN…VKQGAHHVKT (223 aa)). Residue C86 is the Nucleophile of the active site. Active-site residues include H194 and E196.

Part of the FGAM synthase complex composed of 1 PurL, 1 PurQ and 2 PurS subunits.

Its subcellular location is the cytoplasm. The enzyme catalyses N(2)-formyl-N(1)-(5-phospho-beta-D-ribosyl)glycinamide + L-glutamine + ATP + H2O = 2-formamido-N(1)-(5-O-phospho-beta-D-ribosyl)acetamidine + L-glutamate + ADP + phosphate + H(+). It catalyses the reaction L-glutamine + H2O = L-glutamate + NH4(+). Its pathway is purine metabolism; IMP biosynthesis via de novo pathway; 5-amino-1-(5-phospho-D-ribosyl)imidazole from N(2)-formyl-N(1)-(5-phospho-D-ribosyl)glycinamide: step 1/2. In terms of biological role, part of the phosphoribosylformylglycinamidine synthase complex involved in the purines biosynthetic pathway. Catalyzes the ATP-dependent conversion of formylglycinamide ribonucleotide (FGAR) and glutamine to yield formylglycinamidine ribonucleotide (FGAM) and glutamate. The FGAM synthase complex is composed of three subunits. PurQ produces an ammonia molecule by converting glutamine to glutamate. PurL transfers the ammonia molecule to FGAR to form FGAM in an ATP-dependent manner. PurS interacts with PurQ and PurL and is thought to assist in the transfer of the ammonia molecule from PurQ to PurL. The protein is Phosphoribosylformylglycinamidine synthase subunit PurQ of Exiguobacterium sibiricum (strain DSM 17290 / CCUG 55495 / CIP 109462 / JCM 13490 / 255-15).